We begin with the raw amino-acid sequence, 464 residues long: Serine carboxypeptidase-like 22 (464 aa).

Residues 1–22 (MARTHLLFLLFVLLSLATSSTS) form the signal peptide. N52, N113, and N137 each carry an N-linked (GlcNAc...) asparagine glycan. 3 disulfide bridges follow: C86–C346, C247–C258, and C282–C314. Residue S179 is part of the active site. Residues N290 and N335 are each glycosylated (N-linked (GlcNAc...) asparagine). Catalysis depends on residues D385 and H437.

Belongs to the peptidase S10 family. In terms of tissue distribution, expression not detected.

Its subcellular location is the secreted. Its function is as follows. Probable carboxypeptidase. This chain is Serine carboxypeptidase-like 22 (SCPL22), found in Arabidopsis thaliana (Mouse-ear cress).